Consider the following 291-residue polypeptide: Serine/threonine-protein phosphatase Pgam5, mitochondrial (291 aa).

A helical membrane pass occupies residues 7–23 (FACGTGAGLAAFYLQRL). The tract at residues 59-78 (KSLVRPQKNEQPQEQNRYNS) is disordered. Over residues 67 to 77 (NEQPQEQNRYN) the composition is skewed to polar residues.

This sequence belongs to the phosphoglycerate mutase family. BPG-dependent PGAM subfamily. In terms of assembly, interacts with Pk92B/ASK1.

It localises to the mitochondrion outer membrane. The catalysed reaction is O-phospho-L-seryl-[protein] + H2O = L-seryl-[protein] + phosphate. It catalyses the reaction O-phospho-L-threonyl-[protein] + H2O = L-threonyl-[protein] + phosphate. Displays phosphatase activity for serine/threonine residues, and dephosphorylates and activates Pk92B kinase. Has apparently no phosphoglycerate mutase activity. This Drosophila willistoni (Fruit fly) protein is Serine/threonine-protein phosphatase Pgam5, mitochondrial.